Here is a 370-residue protein sequence, read N- to C-terminus: Probable endopolygalacturonase A (370 aa).

A signal peptide spans 1–19 (MPSAKPLFCLATLAGAALA). A propeptide spanning residues 20–32 (APAPSRATDFNKR) is cleaved from the precursor. Cys35 and Cys50 are oxidised to a cystine. 6 PbH1 repeats span residues 162 to 192 (SDNLVIEDVTIDNSDGDSEGGHNTDGFDISE), 193 to 214 (STYITITGATVKNQDDCVAINS), 215 to 235 (GENIYFSGGTCSGGHGLSIGS), 244 to 265 (VKNVTFIDSTVSDSENGVRIKT), 273 to 295 (VEDITYSNIQLSGISDYGIVIEQ), and 307 to 352 (SNGV…DITG). The active-site Proton donor is the Asp207. Cysteines 209 and 225 form a disulfide. His229 is an active-site residue. N-linked (GlcNAc...) asparagine glycosylation is present at Asn246. 2 cysteine pairs are disulfide-bonded: Cys335-Cys340 and Cys359-Cys368.

Belongs to the glycosyl hydrolase 28 family.

The protein resides in the secreted. The catalysed reaction is (1,4-alpha-D-galacturonosyl)n+m + H2O = (1,4-alpha-D-galacturonosyl)n + (1,4-alpha-D-galacturonosyl)m.. Involved in maceration and soft-rotting of plant tissue. Hydrolyzes the 1,4-alpha glycosidic bonds of de-esterified pectate in the smooth region of the plant cell wall. The chain is Probable endopolygalacturonase A (pgaA) from Aspergillus kawachii (strain NBRC 4308) (White koji mold).